We begin with the raw amino-acid sequence, 492 residues long: UTP--glucose-1-phosphate uridylyltransferase (492 aa).

UTP-binding positions include 110-113, Lys124, Gln183, and Gly210; that span reads LNGG. 112-113 contributes to the substrate binding site; sequence GG. Lys124 contacts Mg(2+). Residues His211 and 239 to 241 contribute to the substrate site; that span reads NID. Positions 241 and 379 each coordinate UTP. Mg(2+) is bound at residue Asp241. Lys379 is an active-site residue. The segment at 441-492 is oligomerization; it reads VLTVSGNVLFGKNVVLKGTVIILADEKSKICVPDGSVLEDNIIYGNLPIIDH.

This sequence belongs to the UDPGP type 1 family. Homooctamer.

The enzyme catalyses alpha-D-glucose 1-phosphate + UTP + H(+) = UDP-alpha-D-glucose + diphosphate. Plays a central role as a glucosyl donor in cellular metabolic pathways. The chain is UTP--glucose-1-phosphate uridylyltransferase (UGP1) from Encephalitozoon cuniculi (strain GB-M1) (Microsporidian parasite).